A 446-amino-acid chain; its full sequence is MNVADIAMDLFRGAKGETISIFAIAKVTVTGVSRGLSKLVFGVVDQANLVNLGQYVVYSVVSMIYNITLHPLASFPGPVFWGASRWPSIWRLFKGRLVHDVHALHGQYGHVVRIAPNELAFSSAQAWKDIYGHKRGNNSMEEMPKFHKFYSGISKTPSIVSEPTRDGHRFIRRILSPAFSDKNLRELEPIVQGYISQFIDQLRSHCEDSTGSKVPLDLVSWYNSATFDIVGDLTFGRPFGSLEQGEEDPFIKDINHFAAVGGAMLIFTSHFPGRGILRFLASLGKVFQNGQEKHVTKMEESLVDRMKNKSSRPDIIDGLVKEKDGFQIDYDRVLENAAAITMAGSETTASQLSGLTALLLQNPNCLERLKKEVRSAFKSDKDITSTSSLVGVWQYSANHSPRNFTYPDEFRPDRWLDDRDQKEYEHDHGDAMQPFSVGPRDCPSQK.

Positions 403–446 are disordered; sequence NFTYPDEFRPDRWLDDRDQKEYEHDHGDAMQPFSVGPRDCPSQK. The span at 408–430 shows a compositional bias: basic and acidic residues; the sequence is DEFRPDRWLDDRDQKEYEHDHGD. Residue Cys442 participates in heme binding.

This sequence belongs to the cytochrome P450 family. The cofactor is heme.

It participates in mycotoxin biosynthesis. Functionally, cytochrome P450 monooxygenase; part of the core atranone cluster (CAC) which products are predicted to catalyze most or all steps of mycotoxin atranone synthesis, starting from geranylgeranyl pyrophosphate (GGPP). The initial cyclization of GGPP to dolabellane is probably performed by the terpene cyclase ATR13. The Baeyer-Villiger oxidation near the end of the atranone synthesis, which converts atranones D and E to atranones F and G is predicted to be catalyzed by the monooxygenase ATR8. Of the CAC's other predicted gene products, the reducing PKS ATR6 might synthesize a polyketide chain. This polyketide is probably transferred onto the atranone backbone by the polyketide transferase ATR5. Other predicted CAC products include 4 oxygenases (ATR2, ATR3, ATR4, and ATR14), 3 short-chain reductases (ATR7, ATR9, and ATR10), and a methyltransferase (ATR12). These may all be involved in the various steps of atranone biosynthesis, although their specific roles must await experimental determination. The protein is Cytochrome P450 monooxygenase ATR14 of Stachybotrys chlorohalonatus (strain IBT 40285).